We begin with the raw amino-acid sequence, 509 residues long: ATP synthase subunit alpha (509 aa).

169–176 serves as a coordination point for ATP; sequence GDRQTGKT.

It belongs to the ATPase alpha/beta chains family. As to quaternary structure, F-type ATPases have 2 components, CF(1) - the catalytic core - and CF(0) - the membrane proton channel. CF(1) has five subunits: alpha(3), beta(3), gamma(1), delta(1), epsilon(1). CF(0) has three main subunits: a(1), b(2) and c(9-12). The alpha and beta chains form an alternating ring which encloses part of the gamma chain. CF(1) is attached to CF(0) by a central stalk formed by the gamma and epsilon chains, while a peripheral stalk is formed by the delta and b chains.

It localises to the cell inner membrane. The catalysed reaction is ATP + H2O + 4 H(+)(in) = ADP + phosphate + 5 H(+)(out). Produces ATP from ADP in the presence of a proton gradient across the membrane. The alpha chain is a regulatory subunit. The polypeptide is ATP synthase subunit alpha (Brucella canis (strain ATCC 23365 / NCTC 10854 / RM-666)).